The following is a 230-amino-acid chain: MKLTLEPAPRCLHEYVSQLLEDWQPECLSCEYSHGGSSPPSLHDLFDLELENSRSPSPLLCDWCAEADSESTISTETDVGFTLNTPPVSPLPSYSTSPASIPEDMLLCLEEMPTFDDGDEVRSATTSFEHWENNFDPNVGSFFGCLRCAYYQEQGENSICGLCYLKALAEEPVDADAGEDDEVIFVSAKPGSRKRSAVTSRGSVESSKRPCLPEPEQTEPLDLSLKPRPQ.

An interaction with RB1 in competition with E2F1 region spans residues P40–L48. An LXCXE motif, interaction with host RB1 motif is present at residues L106–E110. A zinc finger spans residues C145 to C163. The disordered stretch occupies residues K189–Q230. The short motif at P220 to S224 is the PXDLS motif, CTBP-binding element. A Nuclear localization signal motif is present at residues K226–Q230.

This sequence belongs to the adenoviridae E1A protein family. As to quaternary structure, interacts with host UBE2I; this interaction interferes with polySUMOylation. Interacts with host RB1; this interaction induces the aberrant dissociation of RB1-E2F1 complex thereby disrupting the activity of RB1 and activating E2F1-regulated genes. Interacts with host ATF7; the interaction enhances ATF7-mediated viral transactivation activity which requires the zinc binding domains of both proteins. Isoform early E1A 32 kDa protein and isoform early E1A 26 kDa protein interact (via N-terminus) with CUL1 and E3 ubiquitin ligase RBX1; these interactions inhibit RBX1-CUL1-dependent elongation reaction of ubiquitin chains and attenuate ubiquitination of SCF(FBXW7) target proteins. Interacts (via PXLXP motif) with host ZMYND11/BS69 (via MYND-type zinc finger); this interaction inhibits E1A mediated transactivation. Interacts with host EP300; this interaction stimulates the acetylation of RB1 by recruiting EP300 and RB1 into a multimeric-protein complex. Interacts with host CTBP1 and CTBP2; this interaction seems to potentiate viral replication. Interacts with host DCAF7. Interacts with host DYRK1A. Interacts with host KPNA4; this interaction allows E1A import into the host nucleus. Interacts with host EP400; this interaction stabilizes MYC. Interacts with host TBP protein; this interaction probably disrupts the TBP-TATA complex.

It is found in the host nucleus. Plays a role in viral genome replication by driving entry of quiescent cells into the cell cycle. Stimulation of progression from G1 to S phase allows the virus to efficiently use the cellular DNA replicating machinery to achieve viral genome replication. E1A protein has both transforming and trans-activating activities. Induces the disassembly of the E2F1 transcription factor from RB1 by direct competition for the same binding site on RB1, with subsequent transcriptional activation of E2F1-regulated S-phase genes and of the E2 region of the adenoviral genome. Release of E2F1 leads to the ARF-mediated inhibition of MDM2 and causes TP53/p53 to accumulate because it is not targeted for degradation by MDM2-mediated ubiquitination anymore. This increase in TP53, in turn, would arrest the cell proliferation and direct its death but this effect is counteracted by the viral protein E1B-55K. Inactivation of the ability of RB1 to arrest the cell cycle is critical for cellular transformation, uncontrolled cellular growth and proliferation induced by viral infection. Interaction with RBX1 and CUL1 inhibits ubiquitination of the proteins targeted by SCF(FBXW7) ubiquitin ligase complex, and may be linked to unregulated host cell proliferation. The tumorigenesis-restraining activity of E1A may be related to the disruption of the host CtBP-CtIP complex through the CtBP binding motif. In Canine adenovirus serotype 1 (strain CLL) (CAdV-1), this protein is Early E1A protein.